The primary structure comprises 316 residues: Probable cell division protein WhiA (316 aa).

A DNA-binding region (H-T-H motif) is located at residues 275-309; the sequence is TLKELGEMVASGKISKSGINHRLRKLDEIAEQLRT.

Belongs to the WhiA family.

It is found in the cytoplasm. The protein localises to the nucleoid. Its function is as follows. Involved in cell division and chromosome segregation. May influence the activity of FtsZ. Binds DNA, but does not seem to function as a transcription factor. The protein is Probable cell division protein WhiA of Bacillus subtilis (strain 168).